The following is a 101-amino-acid chain: Trp operon repressor homolog (101 aa).

The DNA-binding element occupies 59–82 (QREIQQNLNTSAATITRGSNMLKL).

The protein belongs to the TrpR family. Homodimer.

The protein localises to the cytoplasm. In terms of biological role, this protein is an aporepressor. When complexed with L-tryptophan it binds the operator region of the trp operon and prevents the initiation of transcription. The protein is Trp operon repressor homolog of Mannheimia succiniciproducens (strain KCTC 0769BP / MBEL55E).